The following is a 232-amino-acid chain: Myb-related protein 308 (232 aa).

2 HTH myb-type domains span residues Lys-9–Leu-61 and Arg-62–Leu-116. 2 consecutive DNA-binding regions (H-T-H motif) follow at residues Trp-37–Leu-61 and Trp-89–Ile-112.

Expressed in roots, stems, leaves, seed pods and flowers.

The protein localises to the nucleus. Functionally, transcription factor. The protein is Myb-related protein 308 of Antirrhinum majus (Garden snapdragon).